Consider the following 72-residue polypeptide: Heat shock factor-binding protein 1-like protein 1 (72 aa).

Residues 12–62 (DLLQNAAENLLLEVEEHFQALTTTLNLRMEEMGSRIEDLQRNVDDLMTQAG) adopt a coiled-coil conformation.

The protein belongs to the HSBP1 family.

In Mus musculus (Mouse), this protein is Heat shock factor-binding protein 1-like protein 1 (Hsbp1l1).